Here is a 289-residue protein sequence, read N- to C-terminus: Glycine-rich RNA-binding protein 5, mitochondrial (289 aa).

The transit peptide at 1-31 (MAFLSKVGRLFSQTSSHVTASSSMLQSIRCM) directs the protein to the mitochondrion. Positions 34 to 111 (SKIFVGGISY…RRIRVNYATE (78 aa)) constitute an RRM domain. The tract at residues 219 to 289 (QGSSTNAGFD…TDDGDVAKRA (71 aa)) is disordered. The span at 257–272 (GSDNQFGDAENGNTEN) shows a compositional bias: polar residues.

The protein belongs to the GR-RBP family. As to quaternary structure, homodimer. Interacts with MORF8/RIP1 AND RBG3/ORRM3. Binds to RBG2/ORRM5.

It localises to the mitochondrion. Functionally, possibly has a role in RNA transcription or processing during stress. Binds RNAs and DNAs sequence with a preference to single-stranded nucleic acids. Displays strong affinity to poly(U) sequence. Involved in C-to-U editing of mitochondrial RNA. Functions as a major mitochondrial editing factor. Controls 44 percent of the mitochondrial editing sites. In Arabidopsis thaliana (Mouse-ear cress), this protein is Glycine-rich RNA-binding protein 5, mitochondrial.